The sequence spans 807 residues: G-type lectin S-receptor-like serine/threonine-protein kinase At1g61420 (807 aa).

The signal sequence occupies residues 1-24; that stretch reads MGKKWIVFFAYLLLSSFFISSSSA. The 120-residue stretch at 25–144 folds into the Bulb-type lectin domain; that stretch reads GITKESPLPI…FSGRTLWQSF (120 aa). The Extracellular portion of the chain corresponds to 25–426; sequence GITKESPLPI…ELGGNKRKKA (402 aa). 6 N-linked (GlcNAc...) asparagine glycosylation sites follow: Asn53, Asn94, Asn117, Asn134, Asn236, and Asn267. The region spanning 278-314 is the EGF-like; atypical domain; it reads PEHSCDYYGVCGPFGLCVKSVPPKCTCFKGFVPKLIE. Disulfide bonds link Cys282–Cys294 and Cys288–Cys302. N-linked (GlcNAc...) asparagine glycosylation is found at Asn320, Asn336, and Asn375. A PAN domain is found at 333–413; that stretch reads CQGNSTGKYA…EGGELLSIRL (81 aa). 2 disulfides stabilise this stretch: Cys368–Cys389 and Cys372–Cys378. A helical transmembrane segment spans residues 427-447; that stretch reads ITASIVSLSLVVIIAFVAFCF. Topologically, residues 448 to 807 are cytoplasmic; sequence WRYRVKHNAD…EMTKSVILGR (360 aa). A Protein kinase domain is found at 494 to 779; the sequence is FSISNKLGQG…DLPPPEQPTF (286 aa). ATP is bound by residues 500-508 and Lys522; that span reads LGQGGFGPV. A phosphoserine mark is found at Ser528 and Ser543. A caM-binding region spans residues 583-600; the sequence is RKRLEIDWPKRLDIIQGI. Asp619 functions as the Proton acceptor in the catalytic mechanism. Ser623 and Ser636 each carry phosphoserine. Thr653 carries the post-translational modification Phosphothreonine. 2 positions are modified to phosphoserine: Ser696 and Ser790.

This sequence belongs to the protein kinase superfamily. Ser/Thr protein kinase family.

Its subcellular location is the cell membrane. It carries out the reaction L-seryl-[protein] + ATP = O-phospho-L-seryl-[protein] + ADP + H(+). The catalysed reaction is L-threonyl-[protein] + ATP = O-phospho-L-threonyl-[protein] + ADP + H(+). In Arabidopsis thaliana (Mouse-ear cress), this protein is G-type lectin S-receptor-like serine/threonine-protein kinase At1g61420.